We begin with the raw amino-acid sequence, 1379 residues long: DNA-directed RNA polymerase subunit beta'' (1379 aa).

The Zn(2+) site is built by Cys-220, Cys-293, Cys-300, and Cys-303.

It belongs to the RNA polymerase beta' chain family. RpoC2 subfamily. As to quaternary structure, in plastids the minimal PEP RNA polymerase catalytic core is composed of four subunits: alpha, beta, beta', and beta''. When a (nuclear-encoded) sigma factor is associated with the core the holoenzyme is formed, which can initiate transcription. It depends on Zn(2+) as a cofactor.

The protein localises to the plastid. It localises to the chloroplast. The enzyme catalyses RNA(n) + a ribonucleoside 5'-triphosphate = RNA(n+1) + diphosphate. In terms of biological role, DNA-dependent RNA polymerase catalyzes the transcription of DNA into RNA using the four ribonucleoside triphosphates as substrates. The sequence is that of DNA-directed RNA polymerase subunit beta'' from Capsella bursa-pastoris (Shepherd's purse).